The sequence spans 75 residues: uncharacterized protein (75 aa).

The first 26 residues, 1–26 (MQFLERHFSVLFPVLFFFSFYPISFA), serve as a signal peptide directing secretion.

Its subcellular location is the secreted. This is an uncharacterized protein from Schizosaccharomyces pombe (strain 972 / ATCC 24843) (Fission yeast).